The following is a 95-amino-acid chain: MALKPLHDRVLVRRTESEEKTAGGLIIPDSAKEKPSEGVVVACGEGARKDSGELIAMAVKSGDRVLFGKWSGTEVTVDGEELLMMKESDIMGIIE.

Belongs to the GroES chaperonin family. Heptamer of 7 subunits arranged in a ring. Interacts with the chaperonin GroEL.

The protein localises to the cytoplasm. Functionally, together with the chaperonin GroEL, plays an essential role in assisting protein folding. The GroEL-GroES system forms a nano-cage that allows encapsulation of the non-native substrate proteins and provides a physical environment optimized to promote and accelerate protein folding. GroES binds to the apical surface of the GroEL ring, thereby capping the opening of the GroEL channel. This chain is Co-chaperonin GroES, found in Ruegeria pomeroyi (strain ATCC 700808 / DSM 15171 / DSS-3) (Silicibacter pomeroyi).